Here is a 1158-residue protein sequence, read N- to C-terminus: Adipocyte enhancer-binding protein 1 (1158 aa).

The N-terminal stretch at 1-25 is a signal peptide; it reads MAAVRGAPLLSCLLALLALCPGGRP. Positions 41-387 are disordered; sequence FLSELEPEPR…TPTEKVKCPP (347 aa). Residues 45-55 show a composition bias toward acidic residues; sequence LEPEPREDDVE. A compositionally biased stretch (basic and acidic residues) spans 100-110; the sequence is DKGPKVPKESL. The span at 116-166 shows a compositional bias: basic residues; sequence PPKKGKEKPPKATKKPKEKPPKATKKPKEKPPKATKKPKEKPPKATKKPPS. Pro residues predominate over residues 182-192; that stretch reads PLPPPPSPGPE. The span at 193–202 shows a compositional bias: low complexity; the sequence is ELPQEGGAPL. A compositionally biased stretch (basic and acidic residues) spans 211-223; sequence EETHVEAREHQPE. Positions 252 to 266 are enriched in basic residues; sequence RQKQPRPPPSRRRRP. Basic and acidic residues predominate over residues 267–289; sequence ERVWPEPPEEKAPAPAPEERIEP. Over residues 290–300 the composition is skewed to pro residues; sequence PVKPLLPPLPP. The segment covering 326 to 371 has biased composition (basic and acidic residues); that stretch reads PDAERQTDEEKEELKKPKKEDSSPKEETDKWAVEKGKDHKEPRKGE. One can recognise an F5/8 type C domain in the interval 383–540; sequence VKCPPIGMES…LCMRLEVLGC (158 aa). Positions 390–555 are required for DNA-binding and interaction with NFKBIA; it reads MESHRIEDNQ…YSYYAQNEVV (166 aa). The interaction with MAPK1 and MAPK3 stretch occupies residues 421-624; sequence TGATEDDYYD…EPEFRYTAGI (204 aa). Asn528 is a glycosylation site (N-linked (GlcNAc...) asparagine). The interaction with PTEN stretch occupies residues 555–985; the sequence is VATDDLDFRH…TQCNFILARS (431 aa). The 342-residue stretch at 563-904 folds into the Peptidase M14 domain; that stretch reads RHHSYKDMRQ…EALLTFMEQV (342 aa). N-linked (GlcNAc...) asparagine glycosylation occurs at Asn922. The segment at 941–1158 is required for transcriptional repression; the sequence is DYWRILNPGE…ETYTVNFGDF (218 aa). Residues 1006–1158 form an interaction with MAPK1 and MAPK3 region; that stretch reads DPSRPMTPQQ…ETYTVNFGDF (153 aa). A compositionally biased stretch (acidic residues) spans 1108 to 1137; sequence EFETQLEPEFETQLEPEFEEEEEEEKEEEI. Residues 1108–1141 form a disordered region; it reads EFETQLEPEFETQLEPEFEEEEEEEKEEEIATGQ.

The protein belongs to the peptidase M14 family. As to quaternary structure, isoform 1: Interacts with different types of collagen, including collagens I, III, and V. Isoform 2: Interacts with GNG5, NFKBIA, MAPK1, MAPK3 and PTEN. Interaction with MAPK1 may stimulate DNA-binding. May interact with calmodulin. Binds to DNA in vitro. Post-translationally, phosphorylated by MAPK1 in vitro. As to expression, expressed in osteoblast and visceral fat.

The protein resides in the secreted. The protein localises to the cytoplasm. It localises to the nucleus. As a positive regulator of collagen fibrillogenesis, it is probably involved in the organization and remodeling of the extracellular matrix. Functionally, may positively regulate MAP-kinase activity in adipocytes, leading to enhanced adipocyte proliferation and reduced adipocyte differentiation. May also positively regulate NF-kappa-B activity in macrophages by promoting the phosphorylation and subsequent degradation of I-kappa-B-alpha (NFKBIA), leading to enhanced macrophage inflammatory responsiveness. Can act as a transcriptional repressor. The sequence is that of Adipocyte enhancer-binding protein 1 (AEBP1) from Homo sapiens (Human).